The following is a 773-amino-acid chain: Pentatricopeptide repeat-containing protein At1g76280 (773 aa).

PPR repeat units follow at residues Asp-130 to Pro-165, Leu-166 to Lys-200, Asn-201 to His-231, Asp-235 to Gly-269, Leu-332 to Pro-369, Tyr-370 to Cys-400, Tyr-402 to Pro-436, Gly-524 to Ala-558, Asp-559 to Pro-593, Lys-594 to Leu-628, and Asp-629 to Pro-663.

This sequence belongs to the PPR family. P subfamily.

This chain is Pentatricopeptide repeat-containing protein At1g76280, found in Arabidopsis thaliana (Mouse-ear cress).